Consider the following 469-residue polypeptide: Calcium-binding mitochondrial carrier protein SCaMC-2-A (469 aa).

Topologically, residues 1–189 are mitochondrial intermembrane; that stretch reads MLCLCLYVPV…EHLTGMWWRH (189 aa). EF-hand domains follow at residues 47–80, 78–113, and 114–149; these read TYRR…QDHE, DHEK…LGVH, and ISLK…QPAE. Asp-64, Gln-66, and Glu-71 together coordinate Ca(2+). 3 Solcar repeats span residues 184 to 270, 278 to 363, and 375 to 463; these read GMWW…IKRV, LGIS…LKNT, and PGVF…IKST. Residues 190–207 traverse the membrane as a helical segment; that stretch reads LVSGGGAGAVSRTCTAPL. Over 208 to 244 the chain is Mitochondrial matrix; sequence DRLKVLMQVHGCQGKSMCLMSGLTQMIKEGGVRSLWR. The helical transmembrane segment at 245 to 264 threads the bilayer; that stretch reads GNGINVIKIAPETALKFMAY. Over 265-287 the chain is Mitochondrial intermembrane; it reads EQIKRVMGSSQETLGISERFVAG. A helical transmembrane segment spans residues 288–301; the sequence is SLAGVIAQSTIYPM. The Mitochondrial matrix segment spans residues 302–337; the sequence is EVLKTRLALRKTGQYKGISDCAKHILKTEGMSAFYK. Residues 338 to 357 traverse the membrane as a helical segment; that stretch reads GYVPNMLGIIPYAGIDLAVY. Topologically, residues 358-380 are mitochondrial intermembrane; sequence ETLKNTWLQRYGTENADPGVFVL. Residues 381-398 form a helical membrane-spanning segment; that stretch reads LACGTVSSTCGQLASYPL. The Mitochondrial matrix portion of the chain corresponds to 399 to 437; the sequence is ALIRTRMQAQASVEGSSQVSMTGLFKQIMKTEGPTGLYR. The chain crosses the membrane as a helical span at residues 438–457; that stretch reads GLTPNFLKVIPAVSISYVVY. Topologically, residues 458 to 469 are mitochondrial intermembrane; it reads EHIKSTLGVRSR.

This sequence belongs to the mitochondrial carrier (TC 2.A.29) family.

It localises to the mitochondrion inner membrane. In terms of biological role, calcium-dependent mitochondrial solute carrier. The sequence is that of Calcium-binding mitochondrial carrier protein SCaMC-2-A (slc25a25a) from Danio rerio (Zebrafish).